The sequence spans 165 residues: Small ribosomal subunit protein eS10 (165 aa).

Tyrosine 12 bears the Phosphotyrosine mark. A disordered region spans residues 90 to 165; it reads VPATLRRSRP…FGRGRGQPPQ (76 aa). Positions 97 to 128 are enriched in basic and acidic residues; it reads SRPETGRPRPKGPEGERPARFTRGEADRDTYR. Glycyl lysine isopeptide (Lys-Gly) (interchain with G-Cter in ubiquitin) cross-links involve residues lysine 138 and lysine 139. Serine 146 carries the phosphoserine modification. The residue at position 153 (arginine 153) is an Omega-N-methylarginine. The segment covering 154-165 has biased composition (gly residues); that stretch reads GGFGRGRGQPPQ. Arginine 158 and arginine 160 each carry symmetric dimethylarginine.

Belongs to the eukaryotic ribosomal protein eS10 family. Component of the small ribosomal subunit. The methylated form interacts with NPM1. In terms of processing, methylated by PRMT5. Methylation is necessary for its interaction with NPS1, its localization in the granular component (GC) region of the nucleolus, for the proper assembly of ribosomes, protein synthesis and optimal cell proliferation. Monoubiquitinated by ZNF598 when a ribosome has stalled during translation of poly(A) sequences, leading to preclude synthesis of a long poly-lysine tail and initiate the ribosome quality control (RQC) pathway to degrade the potentially detrimental aberrant nascent polypeptide. Deubiquitinated by OTUD3 and USP21, antagonizing ZNF598 activity. Deubiquitinated by OTUD1, antagonizing ZNF598 activity and stimulating formation of polysomes: deubiquitination by OTUD1 promotes stability and translation of a subset mRNAs with a high abundance of rare codons can limit the translation rate. Deubiquitinated by USP10.

The protein localises to the cytoplasm. Its subcellular location is the nucleus. The protein resides in the nucleolus. Its function is as follows. Component of the 40S ribosomal subunit. The ribosome is a large ribonucleoprotein complex responsible for the synthesis of proteins in the cell. In Rattus norvegicus (Rat), this protein is Small ribosomal subunit protein eS10 (Rps10).